A 759-amino-acid chain; its full sequence is Phosphoribosylformylglycinamidine synthase subunit PurL (759 aa).

His-46 is an active-site residue. ATP contacts are provided by Tyr-49 and Lys-88. Glu-90 serves as a coordination point for Mg(2+). Substrate contacts are provided by residues 91-94 (SHNH) and Arg-113. Residue His-92 is the Proton acceptor of the active site. Asp-114 provides a ligand contact to Mg(2+). Gln-237 is a substrate binding site. Residue Asp-265 participates in Mg(2+) binding. 309-311 (ESQ) serves as a coordination point for substrate. The ATP site is built by Asp-498 and Gly-535. Asn-536 lines the Mg(2+) pocket. A substrate-binding site is contributed by Ser-538.

Belongs to the FGAMS family. Monomer. Part of the FGAM synthase complex composed of 1 PurL, 1 PurQ and 2 PurS subunits.

It localises to the cytoplasm. It carries out the reaction N(2)-formyl-N(1)-(5-phospho-beta-D-ribosyl)glycinamide + L-glutamine + ATP + H2O = 2-formamido-N(1)-(5-O-phospho-beta-D-ribosyl)acetamidine + L-glutamate + ADP + phosphate + H(+). It participates in purine metabolism; IMP biosynthesis via de novo pathway; 5-amino-1-(5-phospho-D-ribosyl)imidazole from N(2)-formyl-N(1)-(5-phospho-D-ribosyl)glycinamide: step 1/2. Its function is as follows. Part of the phosphoribosylformylglycinamidine synthase complex involved in the purines biosynthetic pathway. Catalyzes the ATP-dependent conversion of formylglycinamide ribonucleotide (FGAR) and glutamine to yield formylglycinamidine ribonucleotide (FGAM) and glutamate. The FGAM synthase complex is composed of three subunits. PurQ produces an ammonia molecule by converting glutamine to glutamate. PurL transfers the ammonia molecule to FGAR to form FGAM in an ATP-dependent manner. PurS interacts with PurQ and PurL and is thought to assist in the transfer of the ammonia molecule from PurQ to PurL. This chain is Phosphoribosylformylglycinamidine synthase subunit PurL, found in Anaeromyxobacter dehalogenans (strain 2CP-C).